Consider the following 321-residue polypeptide: Methionyl-tRNA formyltransferase (321 aa).

112 to 115 (GLLP) serves as a coordination point for (6S)-5,6,7,8-tetrahydrofolate.

The protein belongs to the Fmt family.

It catalyses the reaction L-methionyl-tRNA(fMet) + (6R)-10-formyltetrahydrofolate = N-formyl-L-methionyl-tRNA(fMet) + (6S)-5,6,7,8-tetrahydrofolate + H(+). Its function is as follows. Attaches a formyl group to the free amino group of methionyl-tRNA(fMet). The formyl group appears to play a dual role in the initiator identity of N-formylmethionyl-tRNA by promoting its recognition by IF2 and preventing the misappropriation of this tRNA by the elongation apparatus. The sequence is that of Methionyl-tRNA formyltransferase from Chlamydia caviae (strain ATCC VR-813 / DSM 19441 / 03DC25 / GPIC) (Chlamydophila caviae).